The following is an 80-amino-acid chain: Raniseptin-7 (80 aa).

Positions 1 to 22 (MAFLKKSLFLVLFLGIVSLSIC) are cleaved as a signal peptide. Positions 23–49 (EEEKREGEEEEKQEEENEELSEEELRE) are excised as a propeptide. The interval 27–46 (REGEEEEKQEEENEELSEEE) is disordered. Positions 30-44 (EEEEKQEEENEELSE) are enriched in acidic residues.

The protein belongs to the frog skin active peptide (FSAP) family. Dermaseptin subfamily. In terms of tissue distribution, expressed by the skin glands.

It is found in the secreted. In terms of biological role, has antibacterial activity. This is Raniseptin-7 from Boana raniceps (Chaco tree frog).